Reading from the N-terminus, the 750-residue chain is Neprilysin (750 aa).

Glycine 2 carries N-myristoyl glycine lipidation. Residues 2–28 (GRSESQMDITDINAPKPKKKQRWTPLE) lie on the Cytoplasmic side of the membrane. Serine 4 and serine 6 each carry phosphoserine. The short motif at 16 to 23 (PKPKKKQR) is the Stop-transfer sequence element. The chain crosses the membrane as a helical; Signal-anchor for type II membrane protein span at residues 29–51 (ISLSVLVLLLTIIAVTMIALYAT). The Extracellular portion of the chain corresponds to 52 to 750 (YDDGICKSSD…MNPERKCRVW (699 aa)). Positions 56–750 (ICKSSDCIKS…MNPERKCRVW (695 aa)) constitute a Peptidase M13 domain. Disulfide bonds link cysteine 57/cysteine 62, cysteine 80/cysteine 735, cysteine 88/cysteine 695, cysteine 143/cysteine 411, cysteine 234/cysteine 242, and cysteine 621/cysteine 747. Position 103 (arginine 103) interacts with a peptide. N-linked (GlcNAc...) asparagine glycans are attached at residues asparagine 145 and asparagine 211. Residues asparagine 285, asparagine 311, and asparagine 325 are each glycosylated (N-linked (GlcNAc...) asparagine). Histidine 584 is a Zn(2+) binding site. Glutamate 585 is an active-site residue. Position 588 (histidine 588) interacts with Zn(2+). N-linked (GlcNAc...) asparagine glycosylation is present at asparagine 628. Glutamate 647 serves as a coordination point for Zn(2+). Aspartate 651 serves as the catalytic Proton donor.

It belongs to the peptidase M13 family. Requires Zn(2+) as cofactor. In terms of processing, myristoylation is a determinant of membrane targeting. Glycosylation at Asn-628 is necessary both for surface expression and neutral endopeptidase activity.

It is found in the cell membrane. The enzyme catalyses Preferential cleavage of polypeptides between hydrophobic residues, particularly with Phe or Tyr at P1'.. The catalysed reaction is substance P + H2O = substance P(1-9) + L-Leu-L-Met-NH2. It catalyses the reaction substance P + H2O = substance P(1-7) + L-Phe-Gly-L-Leu-L-Met-NH2. It carries out the reaction neurotensin + H2O = neurotensin(1-11) + L-isoleucyl-L-leucine. The enzyme catalyses neurotensin + H2O = neurotensin(1-10) + L-tyrosyl-L-isoleucyl-L-leucine. Its function is as follows. Thermolysin-like specificity, but is almost confined on acting on polypeptides of up to 30 amino acids. Biologically important in the destruction of opioid peptides such as Met- and Leu-enkephalins by cleavage of a Gly-Phe bond. Catalyzes cleavage of bradykinin, substance P and neurotensin peptides. Able to cleave angiotensin-1, angiotensin-2 and angiotensin 1-9. Involved in the degradation of the atrial natriuretic factor (ANF). Displays UV-inducible elastase activity toward skin preelastic and elastic fibers. This Mus musculus (Mouse) protein is Neprilysin.